A 198-amino-acid polypeptide reads, in one-letter code: RNA-free ribonuclease P (198 aa).

This sequence belongs to the HARP family.

It carries out the reaction Endonucleolytic cleavage of RNA, removing 5'-extranucleotides from tRNA precursor.. In terms of biological role, RNA-free RNase P that catalyzes the removal of the 5'-leader sequence from pre-tRNA to produce the mature 5'-terminus. This is RNA-free ribonuclease P from Nitrosococcus oceani (strain ATCC 19707 / BCRC 17464 / JCM 30415 / NCIMB 11848 / C-107).